Reading from the N-terminus, the 406-residue chain is Lysosome-associated membrane glycoprotein 1 (406 aa).

An N-terminal signal peptide occupies residues 1–24; the sequence is MAAPGARRPLLLLLLAGLAHGASA. The tract at residues 25–188 is first lumenal domain; the sequence is LFEVKNNGTT…SKEETHCTQD (164 aa). Over 25-370 the chain is Lumenal; that stretch reads LFEVKNNGTT…VEECVQDGNN (346 aa). 10 N-linked (GlcNAc...) asparagine glycosylation sites follow: N31, N52, N58, N70, N78, N97, N101, N115, N159, and N177. The cysteines at positions 35 and 74 are disulfide-linked. A disulfide bridge connects residues C149 and C185. Residues 180–207 are disordered; that stretch reads KEETHCTQDGPSPTTGPPSPSPPLVPTN. Residues 189-218 form a hinge region; sequence GPSPTTGPPSPSPPLVPTNPTVSKYNVTGN. Over residues 193–205 the composition is skewed to pro residues; it reads TTGPPSPSPPLVP. N214, N219, N232, and N240 each carry an N-linked (GlcNAc...) asparagine glycan. The second lumenal domain stretch occupies residues 219–370; the sequence is NGTCLLASMA…VEECVQDGNN (152 aa). The cysteines at positions 222 and 259 are disulfide-linked. The N-linked (GlcNAc...) (high mannose) asparagine glycan is linked to N252. Residues N282, N296, and N311 are each glycosylated (N-linked (GlcNAc...) asparagine). C327 and C364 form a disulfide bridge. A helical membrane pass occupies residues 371–394; the sequence is MLIPIAVGGALAGLVLIVLIAYLI. The Cytoplasmic portion of the chain corresponds to 395–406; that stretch reads GRKRSHAGYQTI.

The protein belongs to the LAMP family. As to quaternary structure, interacts with ABCB9; this interaction strongly stabilizes ABCB9 and protects ABCB9 against lysosomal degradation. Interacts with FURIN. Interacts with TMEM175; inhibiting the proton channel activity of TMEM175. Post-translationally, O- and N-glycosylated; some of the N-glycans attached to LAMP-1 are polylactosaminoglycans.

Its subcellular location is the lysosome membrane. It localises to the endosome membrane. It is found in the late endosome membrane. The protein resides in the cell membrane. The protein localises to the cytolytic granule membrane. In terms of biological role, lysosomal membrane glycoprotein which plays an important role in lysosome biogenesis, lysosomal pH regulation, autophagy and cholesterol homeostasis. Acts as an important regulator of lysosomal lumen pH regulation by acting as a direct inhibitor of the proton channel TMEM175, facilitating lysosomal acidification for optimal hydrolase activity. Also plays an important role in NK-cells cytotoxicity. Mechanistically, participates in cytotoxic granule movement to the cell surface and perforin trafficking to the lytic granule. In addition, protects NK-cells from degranulation-associated damage induced by their own cytotoxic granule content. Presents carbohydrate ligands to selectins. Also implicated in tumor cell metastasis. The sequence is that of Lysosome-associated membrane glycoprotein 1 (Lamp1) from Mus musculus (Mouse).